The chain runs to 238 residues: NAD(P)H-hydrate epimerase (238 aa).

The YjeF N-terminal domain occupies 10–225 (AIKVDQILFN…ALQRQYELNL (216 aa)). 68 to 72 (NNGGD) contributes to the (6S)-NADPHX binding site. K(+) is bound by residues asparagine 69 and aspartate 133. (6S)-NADPHX-binding positions include 137–143 (GFSFKPP) and aspartate 166. Serine 169 provides a ligand contact to K(+).

This sequence belongs to the NnrE/AIBP family. K(+) serves as cofactor.

It catalyses the reaction (6R)-NADHX = (6S)-NADHX. The catalysed reaction is (6R)-NADPHX = (6S)-NADPHX. Its function is as follows. Catalyzes the epimerization of the S- and R-forms of NAD(P)HX, a damaged form of NAD(P)H that is a result of enzymatic or heat-dependent hydration. This is a prerequisite for the S-specific NAD(P)H-hydrate dehydratase to allow the repair of both epimers of NAD(P)HX. This chain is NAD(P)H-hydrate epimerase, found in Drosophila willistoni (Fruit fly).